Here is a 256-residue protein sequence, read N- to C-terminus: MNRFLIIDGLNLVRRIHAAQPNENDVNGLPERVTSACRKLLSKHNPSHVTLVWDGDAISWRKKLYDDYKKGRKPMPEALSQALPALKQHLAERGFHSIDAIAEADDVIATLASKMVQAKGEAIIVSTDKGFTQLLSPQIQLWDHFNQQAITIEDRERQLGVDRSQFIDFLAMAGDSGNKIPGIPGIGPKSACELLKTFRTLANVYASLDKIGAKQAKKLEEGRALARLSYKLVQLQTDIPLNTRLANFRVELTAKA.

A Mg(2+)-binding site is contributed by D105. The region spanning 164 to 250 (SQFIDFLAMA…LNTRLANFRV (87 aa)) is the 5'-3' exonuclease domain. The K(+) site is built by M172, A173, P181, I183, and I186. Residues 185-190 (GIGPKS) form an interaction with DNA region.

The protein belongs to the Xni family. Mg(2+) serves as cofactor. The cofactor is K(+).

Has flap endonuclease activity. During DNA replication, flap endonucleases cleave the 5'-overhanging flap structure that is generated by displacement synthesis when DNA polymerase encounters the 5'-end of a downstream Okazaki fragment. In Shewanella loihica (strain ATCC BAA-1088 / PV-4), this protein is Flap endonuclease Xni.